Consider the following 148-residue polypeptide: Large ribosomal subunit protein uL22c (148 aa).

It belongs to the universal ribosomal protein uL22 family. Part of the 50S ribosomal subunit.

Its subcellular location is the plastid. The protein localises to the chloroplast. Functionally, this protein binds specifically to 23S rRNA. Its function is as follows. The globular domain of the protein is located near the polypeptide exit tunnel on the outside of the subunit, while an extended beta-hairpin is found that lines the wall of the exit tunnel in the center of the 70S ribosome. The chain is Large ribosomal subunit protein uL22c (rpl22) from Triticum aestivum (Wheat).